The primary structure comprises 258 residues: NAD kinase (258 aa).

Asp-51 acts as the Proton acceptor in catalysis. Residues 51 to 52, Arg-56, 119 to 120, Lys-130, Asp-149, 160 to 165, and Ala-184 contribute to the NAD(+) site; these read DG, ND, and TAYSLS.

It belongs to the NAD kinase family. Requires a divalent metal cation as cofactor.

The protein resides in the cytoplasm. The enzyme catalyses NAD(+) + ATP = ADP + NADP(+) + H(+). In terms of biological role, involved in the regulation of the intracellular balance of NAD and NADP, and is a key enzyme in the biosynthesis of NADP. Catalyzes specifically the phosphorylation on 2'-hydroxyl of the adenosine moiety of NAD to yield NADP. In Thermotoga neapolitana (strain ATCC 49049 / DSM 4359 / NBRC 107923 / NS-E), this protein is NAD kinase.